The following is a 166-amino-acid chain: uncharacterized protein (166 aa).

4Fe-4S ferredoxin-type domains follow at residues 44-73, 75-104, and 139-166; these read AREDLFSAVCNGCGECASACPNGLIQLKQQ, ATLEIDYAPCDLCGKCAEVCPTNALHPNFP, and STLEIDNERCNGCGECKITCFVAAITLK. Residues cysteine 53, cysteine 56, cysteine 59, cysteine 63, cysteine 84, cysteine 87, cysteine 90, and cysteine 94 each coordinate [4Fe-4S] cluster.

This is an uncharacterized protein from Haemophilus influenzae (strain ATCC 51907 / DSM 11121 / KW20 / Rd).